The sequence spans 164 residues: 2-C-methyl-D-erythritol 2,4-cyclodiphosphate synthase (164 aa).

Positions 9 and 11 each coordinate a divalent metal cation. Residues 9–11 (DAH) and 36–37 (HS) contribute to the 4-CDP-2-C-methyl-D-erythritol 2-phosphate site. H44 contributes to the a divalent metal cation binding site. Residues 58–60 (DLG), 63–67 (FPDSD), 134–137 (TTTE), F141, and R144 each bind 4-CDP-2-C-methyl-D-erythritol 2-phosphate.

The protein belongs to the IspF family. Homotrimer. A divalent metal cation is required as a cofactor.

The enzyme catalyses 4-CDP-2-C-methyl-D-erythritol 2-phosphate = 2-C-methyl-D-erythritol 2,4-cyclic diphosphate + CMP. The protein operates within isoprenoid biosynthesis; isopentenyl diphosphate biosynthesis via DXP pathway; isopentenyl diphosphate from 1-deoxy-D-xylulose 5-phosphate: step 4/6. Involved in the biosynthesis of isopentenyl diphosphate (IPP) and dimethylallyl diphosphate (DMAPP), two major building blocks of isoprenoid compounds. Catalyzes the conversion of 4-diphosphocytidyl-2-C-methyl-D-erythritol 2-phosphate (CDP-ME2P) to 2-C-methyl-D-erythritol 2,4-cyclodiphosphate (ME-CPP) with a corresponding release of cytidine 5-monophosphate (CMP). The protein is 2-C-methyl-D-erythritol 2,4-cyclodiphosphate synthase of Alkalilimnicola ehrlichii (strain ATCC BAA-1101 / DSM 17681 / MLHE-1).